The primary structure comprises 200 residues: LexA repressor (200 aa).

The segment at residues 28–48 (RAEISNRLGFRSANAAEEHLK) is a DNA-binding region (H-T-H motif). Active-site for autocatalytic cleavage activity residues include Ser121 and Lys158.

The protein belongs to the peptidase S24 family. In terms of assembly, homodimer.

It catalyses the reaction Hydrolysis of Ala-|-Gly bond in repressor LexA.. In terms of biological role, represses a number of genes involved in the response to DNA damage (SOS response), including recA and lexA. In the presence of single-stranded DNA, RecA interacts with LexA causing an autocatalytic cleavage which disrupts the DNA-binding part of LexA, leading to derepression of the SOS regulon and eventually DNA repair. The sequence is that of LexA repressor from Hahella chejuensis (strain KCTC 2396).